The chain runs to 604 residues: Threonine--tRNA ligase (604 aa).

Residues 209–500 form a catalytic region; sequence DHRKLGQEMG…LTEHFGGEFP (292 aa). The Zn(2+) site is built by Cys301, His352, and His477.

This sequence belongs to the class-II aminoacyl-tRNA synthetase family. As to quaternary structure, homodimer. Requires Zn(2+) as cofactor.

The protein resides in the cytoplasm. The catalysed reaction is tRNA(Thr) + L-threonine + ATP = L-threonyl-tRNA(Thr) + AMP + diphosphate + H(+). Catalyzes the attachment of threonine to tRNA(Thr) in a two-step reaction: L-threonine is first activated by ATP to form Thr-AMP and then transferred to the acceptor end of tRNA(Thr). Also edits incorrectly charged L-seryl-tRNA(Thr). This chain is Threonine--tRNA ligase, found in Helicobacter hepaticus (strain ATCC 51449 / 3B1).